Here is a 198-residue protein sequence, read N- to C-terminus: Recombination protein RecR (198 aa).

The C4-type zinc-finger motif lies at 57–72 (CSTCQTLTDQDPCAIC). The Toprim domain maps to 80 to 175 (RMICVVEGVP…KVTRIAQGVP (96 aa)).

It belongs to the RecR family.

Functionally, may play a role in DNA repair. It seems to be involved in an RecBC-independent recombinational process of DNA repair. It may act with RecF and RecO. This Anaeromyxobacter dehalogenans (strain 2CP-C) protein is Recombination protein RecR.